The sequence spans 304 residues: MTKKIKCALIGPGNIGTDLLAKLQRSAVLEPVWMVGIDPESDGLKRAREMGIKTTADGVDGLIPHMQADGVQIVFDATSAYVHAENSRKVNAQGALMIDLTPAAIGPFCVPPVNLIEHVGKGEMNVNMVTCGGQATIPMVAAVSRVQPVAYGEIIATVSSKSAGPGTRKNIDEFTRTTASAVEKVGGAKKGKAIIILNPAEPPLIMRDTVHCLLESEPDQAKITESIHAMIQEVQKYVPGYKLVNGPVFDGKRVSVFLEVEGLGDYLPKYAGNLDIMTAAAARTAEMFAEEILAGRLTLKPVHA.

C131 (acyl-thioester intermediate) is an active-site residue. Residues 162–170 (SAGPGTRKN) and N273 each bind NAD(+).

This sequence belongs to the acetaldehyde dehydrogenase family.

It carries out the reaction acetaldehyde + NAD(+) + CoA = acetyl-CoA + NADH + H(+). The polypeptide is Acetaldehyde dehydrogenase (Polaromonas naphthalenivorans (strain CJ2)).